A 79-amino-acid chain; its full sequence is Small proline-rich protein 4 (79 aa).

The segment covering 1–26 has biased composition (low complexity); the sequence is MSSQQQQRQQQQCPPQRAQQQQVKQP. A disordered region spans residues 1-79; the sequence is MSSQQQQRQQ…AQQASKSKQK (79 aa). A compositionally biased stretch (polar residues) spans 66–79; the sequence is KCPSAQQASKSKQK.

It belongs to the cornifin (SPRR) family. Cross-linked to membrane proteins by transglutaminase.

The protein localises to the cytoplasm. It localises to the cell cortex. In terms of biological role, cross-linked envelope protein of keratinocytes. Involved in UV-induced cornification. The chain is Small proline-rich protein 4 (SPRR4) from Homo sapiens (Human).